The primary structure comprises 78 residues: Defensin beta 136 (78 aa).

An N-terminal signal peptide occupies residues 1-21 (MNLCLSALLFFLVILLPSGKG). Disulfide bonds link cysteine 33–cysteine 60, cysteine 40–cysteine 54, and cysteine 44–cysteine 61.

The protein belongs to the beta-defensin family.

It localises to the secreted. Its function is as follows. Host defense peptide that exhibits antibacterial and antifungal activity. Exhibits antimicrobial activity against E.coli, S.aureus and C.albicans (in vitro). Has high lipopolysaccharide (LPS)-binding affinity, and may thereby be involved in immunoregulation through LPS neutralization. The polypeptide is Defensin beta 136 (DEFB136) (Homo sapiens (Human)).